The chain runs to 194 residues: ECF RNA polymerase sigma factor SigX (194 aa).

A Polymerase core binding motif is present at residues 32 to 45 (DLLQEVYIRVLNSY). Positions 136–155 (IQETAKALRFSESKVKTTQH) form a DNA-binding region, H-T-H motif.

This sequence belongs to the sigma-70 factor family. ECF subfamily. Interacts transiently with the RNAP core.

It localises to the cell membrane. Functionally, sigma factors are initiation factors that promote the attachment of RNA polymerase (RNAP) to specific initiation sites and are then released. May be involved in the regulation of iron metabolism. Associates with RNAP core during early growth phases, association decreases as cells age. This chain is ECF RNA polymerase sigma factor SigX (sigX), found in Bacillus subtilis (strain 168).